The primary structure comprises 413 residues: Glucose-1-phosphate adenylyltransferase (413 aa).

Residues G163, 179-180 (EK), and S197 contribute to the alpha-D-glucose 1-phosphate site.

This sequence belongs to the bacterial/plant glucose-1-phosphate adenylyltransferase family. As to quaternary structure, homotetramer.

The catalysed reaction is alpha-D-glucose 1-phosphate + ATP + H(+) = ADP-alpha-D-glucose + diphosphate. It participates in glycan biosynthesis; glycogen biosynthesis. In terms of biological role, involved in the biosynthesis of ADP-glucose, a building block required for the elongation reactions to produce glycogen. Catalyzes the reaction between ATP and alpha-D-glucose 1-phosphate (G1P) to produce pyrophosphate and ADP-Glc. The chain is Glucose-1-phosphate adenylyltransferase from Parafrankia sp. (strain EAN1pec).